A 211-amino-acid chain; its full sequence is Superoxide dismutase [Fe] (211 aa).

Residues His34, His85, Asp171, and His175 each coordinate Fe cation.

It belongs to the iron/manganese superoxide dismutase family. Requires Fe cation as cofactor.

It carries out the reaction 2 superoxide + 2 H(+) = H2O2 + O2. Destroys superoxide anion radicals which are normally produced within the cells and which are toxic to biological systems. The sequence is that of Superoxide dismutase [Fe] (sod) from Acidianus ambivalens (Desulfurolobus ambivalens).